The primary structure comprises 349 residues: Transcription factor HBP-1a (349 aa).

The segment covering 1 to 11 has biased composition (polar residues); the sequence is MGSNDPSTPSK. Disordered stretches follow at residues 1 to 39, 101 to 196, 224 to 277, and 312 to 349; these read MGSN…WPGF, FHYP…NKPM, GATG…QAEC, and NTSL…QKEP. The span at 113 to 124 shows a compositional bias: low complexity; the sequence is PAGAQGAAPGAA. Positions 174–191 are enriched in polar residues; that stretch reads NENGSAQNGVSHSSSHGT. One can recognise a bZIP domain in the interval 252-315; that stretch reads ELKKQKRKLS…EELLSKNTSL (64 aa). The tract at residues 254 to 273 is basic motif; the sequence is KKQKRKLSNRESARRSRLRK. Residues 261 to 277 show a composition bias toward basic and acidic residues; the sequence is SNRESARRSRLRKQAEC. The leucine-zipper stretch occupies residues 280-315; it reads LGQRAEALKSENSSLRIELDRIKKEYEELLSKNTSL. Residues 334–349 show a composition bias toward basic and acidic residues; it reads MNERGDTNGGSHQKEP.

It belongs to the bZIP family. As to quaternary structure, binds DNA as a dimer.

It is found in the nucleus. In terms of biological role, binds to the hexamer motif 5'-ACGTCA-3' of histone gene promoters. This is Transcription factor HBP-1a from Triticum aestivum (Wheat).